The sequence spans 80 residues: Exodeoxyribonuclease 7 small subunit (80 aa).

It belongs to the XseB family. Heterooligomer composed of large and small subunits.

The protein localises to the cytoplasm. It carries out the reaction Exonucleolytic cleavage in either 5'- to 3'- or 3'- to 5'-direction to yield nucleoside 5'-phosphates.. In terms of biological role, bidirectionally degrades single-stranded DNA into large acid-insoluble oligonucleotides, which are then degraded further into small acid-soluble oligonucleotides. The chain is Exodeoxyribonuclease 7 small subunit from Aliivibrio salmonicida (strain LFI1238) (Vibrio salmonicida (strain LFI1238)).